Here is a 448-residue protein sequence, read N- to C-terminus: Glutamyl-tRNA reductase (448 aa).

Residues 49-52 (TCNR), Ser-109, 114-116 (ETQ), and Gln-120 contribute to the substrate site. The active-site Nucleophile is Cys-50. Position 189 to 194 (189 to 194 (GAGEMS)) interacts with NADP(+).

Belongs to the glutamyl-tRNA reductase family. Homodimer.

The enzyme catalyses (S)-4-amino-5-oxopentanoate + tRNA(Glu) + NADP(+) = L-glutamyl-tRNA(Glu) + NADPH + H(+). It participates in porphyrin-containing compound metabolism; protoporphyrin-IX biosynthesis; 5-aminolevulinate from L-glutamyl-tRNA(Glu): step 1/2. Functionally, catalyzes the NADPH-dependent reduction of glutamyl-tRNA(Glu) to glutamate 1-semialdehyde (GSA). The chain is Glutamyl-tRNA reductase from Staphylococcus haemolyticus (strain JCSC1435).